We begin with the raw amino-acid sequence, 171 residues long: MTKWFNVGKIVNTHGVRGEIRVISRTDFPEERYKVGNTLYISNEKDTDYLPVKVTSHRQHKTFDLLTFEGYNNVDEVEKFKGSLIKVPEEQLGELAEGEYYYHEIIGCSVVTEEGEALGTIKEILSPGANDVWVIKRPKGQDLLIPYIDDVVLQVNIENKLVTIHVMEGLL.

The PRC barrel domain occupies 96-170; it reads AEGEYYYHEI…LVTIHVMEGL (75 aa).

Belongs to the RimM family. As to quaternary structure, binds ribosomal protein uS19.

The protein resides in the cytoplasm. Functionally, an accessory protein needed during the final step in the assembly of 30S ribosomal subunit, possibly for assembly of the head region. Essential for efficient processing of 16S rRNA. May be needed both before and after RbfA during the maturation of 16S rRNA. It has affinity for free ribosomal 30S subunits but not for 70S ribosomes. In Bacillus cereus (strain G9842), this protein is Ribosome maturation factor RimM.